Reading from the N-terminus, the 138-residue chain is ATP synthase epsilon chain (138 aa).

Belongs to the ATPase epsilon chain family. As to quaternary structure, F-type ATPases have 2 components, CF(1) - the catalytic core - and CF(0) - the membrane proton channel. CF(1) has five subunits: alpha(3), beta(3), gamma(1), delta(1), epsilon(1). CF(0) has three main subunits: a, b and c.

Its subcellular location is the cell inner membrane. Functionally, produces ATP from ADP in the presence of a proton gradient across the membrane. This chain is ATP synthase epsilon chain, found in Polaromonas sp. (strain JS666 / ATCC BAA-500).